The following is a 570-amino-acid chain: Sulfite reductase [NADPH] hemoprotein beta-component (570 aa).

Positions 434, 440, 479, and 483 each coordinate [4Fe-4S] cluster. Cysteine 483 lines the siroheme pocket.

Belongs to the nitrite and sulfite reductase 4Fe-4S domain family. In terms of assembly, alpha(8)-beta(8). The alpha component is a flavoprotein, the beta component is a hemoprotein. Siroheme serves as cofactor. The cofactor is [4Fe-4S] cluster.

The catalysed reaction is hydrogen sulfide + 3 NADP(+) + 3 H2O = sulfite + 3 NADPH + 4 H(+). Its pathway is sulfur metabolism; hydrogen sulfide biosynthesis; hydrogen sulfide from sulfite (NADPH route): step 1/1. Functionally, component of the sulfite reductase complex that catalyzes the 6-electron reduction of sulfite to sulfide. This is one of several activities required for the biosynthesis of L-cysteine from sulfate. This Salmonella heidelberg (strain SL476) protein is Sulfite reductase [NADPH] hemoprotein beta-component.